The chain runs to 162 residues: Ribosome maturation factor RimP (162 aa).

Belongs to the RimP family.

It localises to the cytoplasm. Its function is as follows. Required for maturation of 30S ribosomal subunits. The sequence is that of Ribosome maturation factor RimP from Cupriavidus necator (strain ATCC 17699 / DSM 428 / KCTC 22496 / NCIMB 10442 / H16 / Stanier 337) (Ralstonia eutropha).